The primary structure comprises 121 residues: Dihydroneopterin aldolase (121 aa).

Substrate-binding residues include Glu16 and Met111.

The protein belongs to the archaeal dihydroneopterin aldolase family. In terms of assembly, homotetramer.

It catalyses the reaction 7,8-dihydroneopterin = 6-hydroxymethyl-7,8-dihydropterin + glycolaldehyde. Its pathway is cofactor biosynthesis; 5,6,7,8-tetrahydromethanopterin biosynthesis. Catalyzes the conversion of 7,8-dihydroneopterin (H2Neo) to 6-hydroxymethyl-7,8-dihydropterin (6-HMD). This is Dihydroneopterin aldolase from Methanopyrus kandleri (strain AV19 / DSM 6324 / JCM 9639 / NBRC 100938).